Here is a 345-residue protein sequence, read N- to C-terminus: Tyrosine--tRNA ligase (345 aa).

Residue tyrosine 36 participates in L-tyrosine binding. Residues 41-49 (PTGEMHIGH) carry the 'HIGH' region motif. L-tyrosine is bound by residues tyrosine 163, glutamine 167, aspartate 170, and glutamine 185.

It belongs to the class-I aminoacyl-tRNA synthetase family. TyrS type 3 subfamily. In terms of assembly, homodimer.

Its subcellular location is the cytoplasm. The enzyme catalyses tRNA(Tyr) + L-tyrosine + ATP = L-tyrosyl-tRNA(Tyr) + AMP + diphosphate + H(+). Catalyzes the attachment of tyrosine to tRNA(Tyr) in a two-step reaction: tyrosine is first activated by ATP to form Tyr-AMP and then transferred to the acceptor end of tRNA(Tyr). This chain is Tyrosine--tRNA ligase, found in Natronomonas pharaonis (strain ATCC 35678 / DSM 2160 / CIP 103997 / JCM 8858 / NBRC 14720 / NCIMB 2260 / Gabara) (Halobacterium pharaonis).